Here is a 539-residue protein sequence, read N- to C-terminus: MNRQFTCKPGVANRGFSGCSAVLSGGSSSSYRAAGKGLSGGFSSRSLYSLRSPRSISFNVASSSGRTGGYGFGRNRASGFAGSMFGSGALGPSNPSLCLPGGIHQVTVNKSLLAPLNVELDPEIQKVRAQEREQIKALNNKFASFIDKVRFLEQQNQVLQTKWELLQQLDLSNCRRNLEPVYEAHISSLQKQLDSLSGDRVRLDSELRGMRDAVEDCKKRYEEEINKRTTAENEFVVLKKDVDAAYMSKVELQAKVDALDGEIKFLKCLYEGEITQMQSHISDTSVVLSMDNNRNLDLDSIIAEVRAQYEDIALKSKAEAEMVYQTKFQELQLAAGRHGDDLKHTRNEISELTRLIQRLRSEIESVKKQCSNLETAIADAEQRGDCALKDARAKLDELERALHQAKEELARMLREHQELMSMKLALDIEIATYRKLLEGEECRMSGEHTSAVSISVISSSAPGTVGAGTSFGFSSAGTYGYRQSSVAGGYGILSGGCVTGSGNCSPRGDTKNRLGSASEFKEVSGKTLALGSPSKKTMR.

Residues 1 to 130 (MNRQFTCKPG…DPEIQKVRAQ (130 aa)) form a head region. The tract at residues 131–166 (EREQIKALNNKFASFIDKVRFLEQQNQVLQTKWELL) is coil 1A. The 314-residue stretch at 131–444 (EREQIKALNN…KLLEGEECRM (314 aa)) folds into the IF rod domain. Residues 167 to 185 (QQLDLSNCRRNLEPVYEAH) form a linker 1 region. The tract at residues 186-277 (ISSLQKQLDS…CLYEGEITQM (92 aa)) is coil 1B. Residues 278–301 (QSHISDTSVVLSMDNNRNLDLDSI) are linker 12. The segment at 302-440 (IAEVRAQYED…ATYRKLLEGE (139 aa)) is coil 2. Residues 441 to 539 (ECRMSGEHTS…LGSPSKKTMR (99 aa)) form a tail region.

The protein belongs to the intermediate filament family. As to quaternary structure, heterotetramer of two type I and two type II keratins.

Functionally, has a role in hair formation. Specific component of keratin intermediate filaments in the inner root sheath (IRS) of the hair follicle. This is Keratin, type II cytoskeletal 73 (Krt73) from Mus musculus (Mouse).